Reading from the N-terminus, the 464-residue chain is Serine carboxypeptidase-like 22 (464 aa).

An N-terminal signal peptide occupies residues 1–22; that stretch reads MARTHLLFLLFVLLSLATSSTS. N-linked (GlcNAc...) asparagine glycosylation is found at N52, N113, and N137. Cystine bridges form between C86–C346, C247–C258, and C282–C314. S179 is an active-site residue. Residues N290 and N335 are each glycosylated (N-linked (GlcNAc...) asparagine). Residues D385 and H437 contribute to the active site.

The protein belongs to the peptidase S10 family. In terms of tissue distribution, expression not detected.

It is found in the secreted. Its function is as follows. Probable carboxypeptidase. The sequence is that of Serine carboxypeptidase-like 22 (SCPL22) from Arabidopsis thaliana (Mouse-ear cress).